The primary structure comprises 459 residues: Ribulose bisphosphate carboxylase (459 aa).

Residue Asn111 coordinates substrate. Lys166 serves as the catalytic Proton acceptor. Lys168 lines the substrate pocket. Positions 191, 193, and 194 each coordinate Mg(2+). N6-carboxylysine is present on Lys191. His287 (proton acceptor) is an active-site residue. Residues Arg288, His321, and Ser368 each coordinate substrate.

This sequence belongs to the RuBisCO large chain family. Type II subfamily. In terms of assembly, homodimer. Mg(2+) is required as a cofactor.

The protein localises to the cytoplasm. It catalyses the reaction 2 (2R)-3-phosphoglycerate + 2 H(+) = D-ribulose 1,5-bisphosphate + CO2 + H2O. It carries out the reaction D-ribulose 1,5-bisphosphate + O2 = 2-phosphoglycolate + (2R)-3-phosphoglycerate + 2 H(+). Its function is as follows. RuBisCO catalyzes two reactions: the carboxylation of D-ribulose 1,5-bisphosphate, the primary event in carbon dioxide fixation, as well as the oxidative fragmentation of the pentose substrate. Both reactions occur simultaneously and in competition at the same active site. This chain is Ribulose bisphosphate carboxylase, found in Halothiobacillus neapolitanus (strain ATCC 23641 / c2) (Thiobacillus neapolitanus).